The following is a 312-amino-acid chain: Pyridoxal kinase (312 aa).

Residue Met1 is modified to N-acetylmethionine. Pyridoxal 5'-phosphate-binding residues include Ser12 and Thr47. Pyridoxamine contacts are provided by Ser12 and Thr47. Ser59 is modified (phosphoserine). Asp113 is a binding site for K(+). Tyr127 serves as a coordination point for pyridoxal 5'-phosphate. Residue Thr148 coordinates K(+). Asn150 lines the ADP pocket. Residue Asn150 participates in ATP binding. A Phosphoserine modification is found at Ser164. Thr186 contributes to the K(+) binding site. Residue Thr186–Ser187 participates in ADP binding. Thr186–Ser187 lines the ATP pocket. Position 213 is a phosphoserine (Ser213). ADP is bound by residues Met223–Val226 and Thr233–Gly234. ATP is bound by residues Met223–Val226 and Thr233–Gly234. Gly232–Asp235 serves as a coordination point for pyridoxal 5'-phosphate. Residue Asp235 participates in pyridoxamine binding. Asp235 acts as the Proton acceptor in catalysis. Ser285 is modified (phosphoserine).

It belongs to the pyridoxine kinase family. As to quaternary structure, homodimer. Zn(2+) is required as a cofactor. The cofactor is Mg(2+). Ubiquitous.

Its subcellular location is the cytoplasm. The protein localises to the cytosol. It carries out the reaction pyridoxal + ATP = pyridoxal 5'-phosphate + ADP + H(+). The catalysed reaction is pyridoxamine + ATP = pyridoxamine 5'-phosphate + ADP + H(+). The enzyme catalyses pyridoxine + ATP = pyridoxine 5'-phosphate + ADP + H(+). The protein operates within cofactor metabolism; pyridoxal 5'-phosphate salvage; pyridoxal 5'-phosphate from pyridoxal: step 1/1. It participates in cofactor metabolism; pyridoxal 5'-phosphate salvage; pyridoxine 5'-phosphate from pyridoxine: step 1/1. It functions in the pathway cofactor metabolism; pyridoxal 5'-phosphate salvage; pyridoxamine 5'-phosphate from pyridoxamine: step 1/1. With respect to regulation, activated by K(+). Activity is increased in the presence of Na(+). Catalyzes the phosphorylation of the dietary vitamin B6 vitamers pyridoxal (PL), pyridoxine (PN) and pyridoxamine (PM) to form pyridoxal 5'-phosphate (PLP), pyridoxine 5'-phosphate (PNP) and pyridoxamine 5'-phosphate (PMP), respectively. PLP is the active form of vitamin B6, and acts as a cofactor for over 140 different enzymatic reactions. The sequence is that of Pyridoxal kinase (PDXK) from Ovis aries (Sheep).